Here is an 834-residue protein sequence, read N- to C-terminus: Copper-exporting P-type ATPase (834 aa).

Residues 2 to 186 (SQTIDLTLDG…TAVATMKRFR (185 aa)) are Cytoplasmic-facing. 2 consecutive HMA domains span residues 3–64 (QTID…YDAS) and 99–162 (DSQQ…YGAE). 4 residues coordinate Cu(+): Cys14, Cys17, Cys110, and Cys113. 2 short sequence motifs (CXXC motif) span residues 14–17 (CGHC) and 110–113 (CASC). Residues 187-207 (WQAIVALAVGIPVMVWGMIGD) form a helical membrane-spanning segment. Residues 208–217 (NMMVTADNRS) are Periplasmic; loop 1-facing. The chain crosses the membrane as a helical span at residues 218–238 (LWLVIGLITLAVMVFAGGHFY). Residues 239 to 253 (RSAWKSLLNGAATMD) lie on the Cytoplasmic side of the membrane. A helical transmembrane segment spans residues 254 to 274 (TLVALGTGVAWLYSMSVNLWP). At 275–283 (QWFPMEARH) the chain is on the periplasmic; loop 2 side. The helical transmembrane segment at 284 to 304 (LYYEASAMIIGLINLGHMLEA) threads the bilayer. The Cytoplasmic segment spans residues 305 to 437 (RARQRSSKAL…EIGQLADKIS (133 aa)). A helical transmembrane segment spans residues 438 to 458 (AVFVPVVVVIALVSAAIWYFF). The Periplasmic; loop 3 portion of the chain corresponds to 459–463 (GPAPQ). Residues 464 to 484 (IVYTLVIATTVLIIACPCALG) form a helical membrane-spanning segment. Topologically, residues 485 to 778 (LATPMSIISG…ATLHNMKQNL (294 aa)) are cytoplasmic. The 4-aspartylphosphate intermediate role is filled by Asp523. Residues Asp720 and Asp724 each contribute to the Mg(2+) site. Residues 779–799 (LGAFIYNSIGIPVAAGILWPF) form a helical membrane-spanning segment. A topological domain (periplasmic; loop 4) is located at residue Thr800. A helical membrane pass occupies residues 801-821 (GTLLNPVVAGAAMALSSITVV). The Cytoplasmic portion of the chain corresponds to 822–834 (SNANRLLRFKPKE).

This sequence belongs to the cation transport ATPase (P-type) (TC 3.A.3) family. Type IB subfamily. Copper-exporting P-type ATPase interacts with apo-periplasmic copper chaperone CusF; when CusF is precharged with copper it binds very little CopA. The periplasmic loops of CopA, especially the first half of loop 1, play a large role in binding to CusF.

Its subcellular location is the cell inner membrane. It localises to the cytoplasm. It catalyses the reaction Cu(+)(in) + ATP + H2O = Cu(+)(out) + ADP + phosphate + H(+). With respect to regulation, export is inhibited by vanadate. Phosphorylation is inhibited by vanadate and sensitive to KOH and hydroxylamine; it is not inhibited by azide. Phosphorylation is Cu(+) not Cu(2+)-dependent. ATPase activity is inhibited by bathocuproindisulfonate (BCDS), which chelates Cu(+) but not Cu(2+), and stimulated 3-4-fold by Cu(+). ATPase activity is inhibited by Cu(2+) plus DTT or Ag(+). Exports Cu(+) from the cytoplasm to the periplasm. Binds 2 Cu(+) ions per monomer, which are transferred to periplasmic copper chaperone CusF upon ATP hydrolysis. In vitro an excess of CusF over CopA is required for efficient transfer. May also be involved in silver export. In terms of biological role, mRNA is subject to programmed ribosomal frameshifting which produces a cytoplasmic copper chaperone CopA(Z) that corresponds to the first HMA domain. The soluble form is essential for cell survivial in the presence of CuSO(4); in growth competition experiments between wild-type and a version that prevents expression of CopA(Z) after 50 generations the non-CopA(Z) version is nearly extinct. The first HMA domain (residues 1-70) can be replaced by B.subtilis Cu chaperone CopZ. The polypeptide is Copper-exporting P-type ATPase (Escherichia coli (strain K12)).